We begin with the raw amino-acid sequence, 367 residues long: tRNA-specific 2-thiouridylase MnmA (367 aa).

Residues 14 to 21 (AMSGGVDS) and Leu40 contribute to the ATP site. Cys108 acts as the Nucleophile in catalysis. Cys108 and Cys204 form a disulfide bridge. Gly132 contacts ATP. An interaction with tRNA region spans residues 154–156 (KDQ). Residue Cys204 is the Cysteine persulfide intermediate of the active site.

The protein belongs to the MnmA/TRMU family.

Its subcellular location is the cytoplasm. The enzyme catalyses S-sulfanyl-L-cysteinyl-[protein] + uridine(34) in tRNA + AH2 + ATP = 2-thiouridine(34) in tRNA + L-cysteinyl-[protein] + A + AMP + diphosphate + H(+). In terms of biological role, catalyzes the 2-thiolation of uridine at the wobble position (U34) of tRNA, leading to the formation of s(2)U34. This chain is tRNA-specific 2-thiouridylase MnmA, found in Rickettsia bellii (strain OSU 85-389).